The sequence spans 318 residues: Protein-L-histidine N-pros-methyltransferase (318 aa).

The N-terminal stretch at 1 to 18 is a signal peptide; it reads MRLLAGWLCLSLASVWLA. N35 carries N-linked (GlcNAc...) asparagine glycosylation. S-adenosyl-L-homocysteine-binding residues include E174, N210, and Y295.

Belongs to the METTL9 family.

It is found in the endoplasmic reticulum. The protein localises to the mitochondrion. The enzyme catalyses L-histidyl-[protein] + S-adenosyl-L-methionine = N(pros)-methyl-L-histidyl-[protein] + S-adenosyl-L-homocysteine + H(+). Protein-histidine N-methyltransferase that specifically catalyzes 1-methylhistidine (pros-methylhistidine) methylation of target proteins. Specifically methylates the second His of proteins with a His-x-His (HxH) motif (where 'x' is preferably a small amino acid), while exploiting the first one as a recognition signature. Catalyzes methylation of target proteins such as S100A9, NDUFB3, SLC39A5, SLC39A7, ARMC6 and DNAJB12; 1-methylhistidine modification may affect the binding of zinc and other metals to its target proteins. Constitutes the main methyltransferase for the 1-methylhistidine modification in cell. In Bos taurus (Bovine), this protein is Protein-L-histidine N-pros-methyltransferase.